The chain runs to 269 residues: Serine/arginine-rich splicing factor 5 (269 aa).

In terms of domain architecture, RRM 1 spans 4–74; the sequence is CRVFIGRLNP…ERVTIEHARA (71 aa). The segment at 73–105 is disordered; the sequence is RARSRGGRGRGRYSDRFSSRRPRNDRRNAPPVR. Residues 74–83 show a composition bias toward basic residues; sequence ARSRGGRGRG. Residue serine 86 is modified to Phosphoserine. In terms of domain architecture, RRM 2 spans 108–189; it reads NRLIVENLSS…SKRHRSRSRS (82 aa). At lysine 167 the chain carries N6-acetyllysine. The disordered stretch occupies residues 174 to 269; the sequence is IKLIEGSKRH…SRSRSVDSGN (96 aa). Residues 181–226 show a composition bias toward basic residues; sequence KRHRSRSRSRSRTRSSSRSRSRSRSRRSKSYSRSRSRSRSRSKSRS. 5 positions are modified to phosphoserine: serine 224, serine 226, serine 230, serine 247, and serine 250. The segment covering 239–251 has biased composition (low complexity); that stretch reads RGSSSRSKSPASV.

It belongs to the splicing factor SR family. As to quaternary structure, found in a pre-mRNA splicing complex with SRSF4/SFRS4, SRSF5/SFRS5, SNRNP70, SNRPA1, SRRM1 and SRRM2. Interacts with RBMY; the interaction inhibits SRSF5 pre-mRNA splicing. Interacts (via RS domain) with PHF5A (via N-terminus). Post-translationally, extensively phosphorylated on serine residues in the RS domain.

The protein localises to the nucleus. Its function is as follows. May be required for progression through G1 and entry into S phase of cell growth. May play a regulatory role in pre-mRNA splicing. Autoregulates its own expression. Plays a role in constitutive splicing and can modulate the selection of alternative splice sites. The chain is Serine/arginine-rich splicing factor 5 (Srsf5) from Mus musculus (Mouse).